A 160-amino-acid polypeptide reads, in one-letter code: Cytochrome b6-f complex subunit 4 (160 aa).

The next 3 helical transmembrane spans lie at 36 to 56 (LLYV…GLAI), 95 to 115 (LLGI…PFIE), and 131 to 151 (AIFL…TFPI).

The protein belongs to the cytochrome b family. PetD subfamily. As to quaternary structure, the 4 large subunits of the cytochrome b6-f complex are cytochrome b6, subunit IV (17 kDa polypeptide, PetD), cytochrome f and the Rieske protein, while the 4 small subunits are PetG, PetL, PetM and PetN. The complex functions as a dimer.

It localises to the cellular thylakoid membrane. Functionally, component of the cytochrome b6-f complex, which mediates electron transfer between photosystem II (PSII) and photosystem I (PSI), cyclic electron flow around PSI, and state transitions. In Microcystis aeruginosa (strain NIES-843 / IAM M-2473), this protein is Cytochrome b6-f complex subunit 4.